Consider the following 388-residue polypeptide: Alanine racemase 3 (388 aa).

Residue K41 is the Proton acceptor; specific for D-alanine of the active site. At K41 the chain carries N6-(pyridoxal phosphate)lysine. Position 135 (R135) interacts with substrate. Y256 functions as the Proton acceptor; specific for L-alanine in the catalytic mechanism. M304 is a substrate binding site.

It belongs to the alanine racemase family. The cofactor is pyridoxal 5'-phosphate.

The enzyme catalyses L-alanine = D-alanine. The protein operates within amino-acid biosynthesis; D-alanine biosynthesis; D-alanine from L-alanine: step 1/1. In terms of biological role, catalyzes the interconversion of L-alanine and D-alanine. May also act on other amino acids. The chain is Alanine racemase 3 (alr3) from Mesorhizobium japonicum (strain LMG 29417 / CECT 9101 / MAFF 303099) (Mesorhizobium loti (strain MAFF 303099)).